The chain runs to 295 residues: Nucleotide-binding protein PEPE_0450 (295 aa).

Residue 12 to 19 participates in ATP binding; that stretch reads GMSGAGKT. 62–65 serves as a coordination point for GTP; the sequence is DLRS.

It belongs to the RapZ-like family.

Functionally, displays ATPase and GTPase activities. This chain is Nucleotide-binding protein PEPE_0450, found in Pediococcus pentosaceus (strain ATCC 25745 / CCUG 21536 / LMG 10740 / 183-1w).